We begin with the raw amino-acid sequence, 417 residues long: Histidine--tRNA ligase (417 aa).

Belongs to the class-II aminoacyl-tRNA synthetase family. In terms of assembly, homodimer.

Its subcellular location is the cytoplasm. The catalysed reaction is tRNA(His) + L-histidine + ATP = L-histidyl-tRNA(His) + AMP + diphosphate + H(+). This Caldanaerobacter subterraneus subsp. tengcongensis (strain DSM 15242 / JCM 11007 / NBRC 100824 / MB4) (Thermoanaerobacter tengcongensis) protein is Histidine--tRNA ligase.